Reading from the N-terminus, the 1158-residue chain is ATP-dependent helicase/deoxyribonuclease subunit B (1158 aa).

In terms of domain architecture, UvrD-like helicase ATP-binding spans 1–275 (MTLHAYLGRA…QYFNQLYRFN (275 aa)). 8–15 (GRAGTGKS) is a binding site for ATP. Residues 269-583 (NQLYRFNNQD…SIGTMDLAKV (315 aa)) enclose the UvrD-like helicase C-terminal domain. Residues cysteine 784, cysteine 1112, cysteine 1115, and cysteine 1121 each coordinate [4Fe-4S] cluster.

This sequence belongs to the helicase family. AddB/RexB type 1 subfamily. Heterodimer of AddA and AddB. Mg(2+) is required as a cofactor. The cofactor is [4Fe-4S] cluster.

Its function is as follows. The heterodimer acts as both an ATP-dependent DNA helicase and an ATP-dependent, dual-direction single-stranded exonuclease. Recognizes the chi site generating a DNA molecule suitable for the initiation of homologous recombination. The AddB subunit has 5' -&gt; 3' nuclease activity but not helicase activity. In Staphylococcus aureus (strain MRSA252), this protein is ATP-dependent helicase/deoxyribonuclease subunit B.